Here is a 686-residue protein sequence, read N- to C-terminus: Proprotein convertase subtilisin/kexin type 9 (686 aa).

The signal sequence occupies residues 1-28 (MGTVSSRRLWWPLPLLLLLLLGPAGTRA). A propeptide spanning residues 29-150 (QEDDDDDYEE…IEEDSSVFAQ (122 aa)) is cleaved from the precursor. At Y36 the chain carries Sulfotyrosine. Position 45 is a phosphoserine (S45). The 73-residue stretch at 75 to 147 (TYVVVLKEET…VDYIEEDSSV (73 aa)) folds into the Inhibitor I9 domain. The region spanning 153-459 (PWNLERITPA…GWQLFCRTVW (307 aa)) is the Peptidase S8 domain. Active-site charge relay system residues include D184 and H224. 2 disulfide bridges follow: C221-C253 and C321-C356. S384 (charge relay system) is an active-site residue. The tract at residues 448–686 (GEGWQLFCRT…CRSQHLAQAS (239 aa)) is C-terminal domain. Disulfide bonds link C455–C525, C475–C524, and C484–C507. Residue N531 is glycosylated (N-linked (GlcNAc...) asparagine). 6 disulfides stabilise this stretch: C532–C599, C550–C598, C560–C586, C606–C677, C624–C676, and C633–C652. S686 carries the post-translational modification Phosphoserine.

The protein belongs to the peptidase S8 family. Monomer. Can self-associate to form dimers and higher multimers which may have increased LDLR degrading activity. The precursor protein but not the mature protein may form multimers. Interacts with APOB, VLDLR, LRP8/APOER2 and BACE1. The full-length immature form (pro-PCSK9) interacts with SCNN1A, SCNN1B and SCNN1G. The pro-PCSK9 form (via C-terminal domain) interacts with LDLR. Interacts (via the C-terminal domain) with ANXA2 (via repeat Annexin 1); the interaction inhibits the degradation of LDLR. Requires Ca(2+) as cofactor. Cleavage by furin and PCSK5 generates a truncated inactive protein that is unable to induce LDLR degradation. Post-translationally, undergoes autocatalytic cleavage in the endoplasmic reticulum to release the propeptide from the N-terminus and the cleavage of the propeptide is strictly required for its maturation and activation. The cleaved propeptide however remains associated with the catalytic domain through non-covalent interactions, preventing potential substrates from accessing its active site. As a result, it is secreted from cells as a propeptide-containing, enzymatically inactive protein. In terms of processing, phosphorylation protects the propeptide against proteolysis.

Its subcellular location is the cytoplasm. It is found in the secreted. The protein localises to the endosome. The protein resides in the lysosome. It localises to the cell surface. Its subcellular location is the endoplasmic reticulum. It is found in the golgi apparatus. With respect to regulation, its proteolytic activity is autoinhibited by the non-covalent binding of the propeptide to the catalytic domain. Inhibited by EGTA. Crucial player in the regulation of plasma cholesterol homeostasis. Binds to low-density lipid receptor family members: low density lipoprotein receptor (LDLR), very low density lipoprotein receptor (VLDLR), apolipoprotein E receptor (LRP1/APOER) and apolipoprotein receptor 2 (LRP8/APOER2), and promotes their degradation in intracellular acidic compartments. Acts via a non-proteolytic mechanism to enhance the degradation of the hepatic LDLR through a clathrin LDLRAP1/ARH-mediated pathway. May prevent the recycling of LDLR from endosomes to the cell surface or direct it to lysosomes for degradation. Can induce ubiquitination of LDLR leading to its subsequent degradation. Inhibits intracellular degradation of APOB via the autophagosome/lysosome pathway in a LDLR-independent manner. Involved in the disposal of non-acetylated intermediates of BACE1 in the early secretory pathway. Inhibits epithelial Na(+) channel (ENaC)-mediated Na(+) absorption by reducing ENaC surface expression primarily by increasing its proteasomal degradation. Regulates neuronal apoptosis via modulation of LRP8/APOER2 levels and related anti-apoptotic signaling pathways. This chain is Proprotein convertase subtilisin/kexin type 9 (PCSK9), found in Saguinus labiatus (Red-chested mustached tamarin).